The following is a 550-amino-acid chain: MFCVQCEQTIRTPAGNGCSYAQGMCGKTAETSDLQDLLIAALQGLSAWAVKAREYGIINHDVDNFAPRAFFSTLTNVNFDSPRIVGYAREAIALREALKAQCLSVDANAHCDNPMADLQLVSDDLGELQRQAAEFIPNKDKAAIGENILGLRLLCLYGLKGAAAYMEHAHVLGQYDNDIYAQYHKIMAWLGTWPADMNALLECAMEIGQMNFKVMSILDAGETTKYGHPTPTQVNVKATEGKCILISGHDLKDLYNLLEQTEGTGVNVYTHGEMLPAHGYPELRKFKHLVGNYGSGWQNQQVEFARFPGPIVMTSNCIIDPTVGSYDDRIWTRSIVGWPGVSHLEGDDFGPVIAQAQQMAGFPYSEIPHLITVGFGRQTLLGAADTLIDLVSREKLRHIFLVGGCDGARGERNYFTDFATSVPDDCLILTLACGKYRFNKLEFGDIEGLPRLVDAGQCNDAYSAIILAVTLAEKLGCGVNDLPLSLVLSWFEQKAIVILLTLLSLGVKNIVTGPTAPGFFTPDLLAILNEKFGLRSVTTVEEDMKQLLSA.

Positions 3, 6, 18, and 25 each coordinate [2Fe-2S] cluster. Hybrid [4Fe-2O-2S] cluster contacts are provided by histidine 249, glutamate 273, cysteine 317, cysteine 405, cysteine 433, cysteine 458, glutamate 492, and lysine 494. A Cysteine persulfide modification is found at cysteine 405.

Belongs to the HCP family. Requires [2Fe-2S] cluster as cofactor. The cofactor is hybrid [4Fe-2O-2S] cluster.

It localises to the cytoplasm. It carries out the reaction A + NH4(+) + H2O = hydroxylamine + AH2 + H(+). Catalyzes the reduction of hydroxylamine to form NH(3) and H(2)O. The polypeptide is Hydroxylamine reductase (Salmonella choleraesuis (strain SC-B67)).